The sequence spans 119 residues: Large ribosomal subunit protein uL22 (119 aa).

The protein belongs to the universal ribosomal protein uL22 family. As to quaternary structure, part of the 50S ribosomal subunit.

Its function is as follows. This protein binds specifically to 23S rRNA; its binding is stimulated by other ribosomal proteins, e.g. L4, L17, and L20. It is important during the early stages of 50S assembly. It makes multiple contacts with different domains of the 23S rRNA in the assembled 50S subunit and ribosome. Functionally, the globular domain of the protein is located near the polypeptide exit tunnel on the outside of the subunit, while an extended beta-hairpin is found that lines the wall of the exit tunnel in the center of the 70S ribosome. This chain is Large ribosomal subunit protein uL22, found in Rickettsia canadensis (strain McKiel).